The following is a 137-amino-acid chain: Large ribosomal subunit protein uL16 (137 aa).

This sequence belongs to the universal ribosomal protein uL16 family. Part of the 50S ribosomal subunit.

Binds 23S rRNA and is also seen to make contacts with the A and possibly P site tRNAs. The sequence is that of Large ribosomal subunit protein uL16 from Xylella fastidiosa (strain M23).